The sequence spans 453 residues: Ezy-1 protein (453 aa).

Positions 1–28 are cleaved as a signal peptide; that stretch reads MQLSNSLRSARSAAASSGCALASRPVVA. 3 disordered regions span residues 167 to 187, 272 to 307, and 412 to 453; these read SDGG…DADG, TGKA…SSGG, and SAGD…SPNM. Over residues 279-300 the composition is skewed to acidic residues; the sequence is AEGDDGEGEEEGEAQDVGEDAV. Positions 415–425 are enriched in basic and acidic residues; that stretch reads DGHEPEPKRPE.

This is Ezy-1 protein (Ezy-1) from Chlamydomonas reinhardtii (Chlamydomonas smithii).